The chain runs to 492 residues: Regulatory protein ViaA (492 aa).

Belongs to the ViaA family. In terms of assembly, homodimer. Interacts with RavA.

The protein resides in the cytoplasm. Functionally, component of the RavA-ViaA chaperone complex, which may act on the membrane to optimize the function of some of the respiratory chains. ViaA stimulates the ATPase activity of RavA. This chain is Regulatory protein ViaA, found in Pectobacterium carotovorum subsp. carotovorum (strain PC1).